The following is a 253-amino-acid chain: 5'/3'-nucleotidase SurE (253 aa).

A divalent metal cation contacts are provided by aspartate 8, aspartate 9, serine 39, and asparagine 92.

This sequence belongs to the SurE nucleotidase family. A divalent metal cation is required as a cofactor.

The protein resides in the cytoplasm. It catalyses the reaction a ribonucleoside 5'-phosphate + H2O = a ribonucleoside + phosphate. The enzyme catalyses a ribonucleoside 3'-phosphate + H2O = a ribonucleoside + phosphate. The catalysed reaction is [phosphate](n) + H2O = [phosphate](n-1) + phosphate + H(+). Functionally, nucleotidase with a broad substrate specificity as it can dephosphorylate various ribo- and deoxyribonucleoside 5'-monophosphates and ribonucleoside 3'-monophosphates with highest affinity to 3'-AMP. Also hydrolyzes polyphosphate (exopolyphosphatase activity) with the preference for short-chain-length substrates (P20-25). Might be involved in the regulation of dNTP and NTP pools, and in the turnover of 3'-mononucleotides produced by numerous intracellular RNases (T1, T2, and F) during the degradation of various RNAs. The sequence is that of 5'/3'-nucleotidase SurE from Enterobacter sp. (strain 638).